Consider the following 179-residue polypeptide: Large ribosomal subunit protein uL6 (179 aa).

Belongs to the universal ribosomal protein uL6 family. Part of the 50S ribosomal subunit.

This protein binds to the 23S rRNA, and is important in its secondary structure. It is located near the subunit interface in the base of the L7/L12 stalk, and near the tRNA binding site of the peptidyltransferase center. This Chlorobaculum tepidum (strain ATCC 49652 / DSM 12025 / NBRC 103806 / TLS) (Chlorobium tepidum) protein is Large ribosomal subunit protein uL6.